The primary structure comprises 185 residues: Elongation factor P (185 aa).

Belongs to the elongation factor P family.

Its subcellular location is the cytoplasm. It participates in protein biosynthesis; polypeptide chain elongation. In terms of biological role, involved in peptide bond synthesis. Stimulates efficient translation and peptide-bond synthesis on native or reconstituted 70S ribosomes in vitro. Probably functions indirectly by altering the affinity of the ribosome for aminoacyl-tRNA, thus increasing their reactivity as acceptors for peptidyl transferase. The chain is Elongation factor P from Nitratidesulfovibrio vulgaris (strain DSM 19637 / Miyazaki F) (Desulfovibrio vulgaris).